We begin with the raw amino-acid sequence, 316 residues long: 4-hydroxy-3-methylbut-2-enyl diphosphate reductase (316 aa).

Cysteine 12 is a binding site for [4Fe-4S] cluster. (2E)-4-hydroxy-3-methylbut-2-enyl diphosphate-binding residues include histidine 43 and histidine 81. Histidine 43 and histidine 81 together coordinate dimethylallyl diphosphate. Isopentenyl diphosphate contacts are provided by histidine 43 and histidine 81. Residue cysteine 103 participates in [4Fe-4S] cluster binding. (2E)-4-hydroxy-3-methylbut-2-enyl diphosphate is bound at residue histidine 131. Histidine 131 contacts dimethylallyl diphosphate. An isopentenyl diphosphate-binding site is contributed by histidine 131. Glutamate 133 (proton donor) is an active-site residue. (2E)-4-hydroxy-3-methylbut-2-enyl diphosphate is bound at residue threonine 170. A [4Fe-4S] cluster-binding site is contributed by cysteine 198. Positions 226, 228, and 271 each coordinate (2E)-4-hydroxy-3-methylbut-2-enyl diphosphate. 3 residues coordinate dimethylallyl diphosphate: serine 226, asparagine 228, and serine 271. Serine 226, asparagine 228, and serine 271 together coordinate isopentenyl diphosphate.

Belongs to the IspH family. It depends on [4Fe-4S] cluster as a cofactor.

The catalysed reaction is isopentenyl diphosphate + 2 oxidized [2Fe-2S]-[ferredoxin] + H2O = (2E)-4-hydroxy-3-methylbut-2-enyl diphosphate + 2 reduced [2Fe-2S]-[ferredoxin] + 2 H(+). The enzyme catalyses dimethylallyl diphosphate + 2 oxidized [2Fe-2S]-[ferredoxin] + H2O = (2E)-4-hydroxy-3-methylbut-2-enyl diphosphate + 2 reduced [2Fe-2S]-[ferredoxin] + 2 H(+). Its pathway is isoprenoid biosynthesis; dimethylallyl diphosphate biosynthesis; dimethylallyl diphosphate from (2E)-4-hydroxy-3-methylbutenyl diphosphate: step 1/1. It functions in the pathway isoprenoid biosynthesis; isopentenyl diphosphate biosynthesis via DXP pathway; isopentenyl diphosphate from 1-deoxy-D-xylulose 5-phosphate: step 6/6. Catalyzes the conversion of 1-hydroxy-2-methyl-2-(E)-butenyl 4-diphosphate (HMBPP) into a mixture of isopentenyl diphosphate (IPP) and dimethylallyl diphosphate (DMAPP). Acts in the terminal step of the DOXP/MEP pathway for isoprenoid precursor biosynthesis. The polypeptide is 4-hydroxy-3-methylbut-2-enyl diphosphate reductase (Bacillus thuringiensis (strain Al Hakam)).